Reading from the N-terminus, the 484-residue chain is Chromosomal replication initiator protein DnaA (484 aa).

The domain I, interacts with DnaA modulators stretch occupies residues 1 to 73 (MQEGKNIWSL…EILTEKGHNT (73 aa)). Residues 73 to 140 (TINVEFINPP…EDIHTKYRNP (68 aa)) form a domain II region. The tract at residues 141 to 357 (FLKKKYTFEN…AAVTKLKAHI (217 aa)) is domain III, AAA+ region. ATP contacts are provided by Gly-185, Gly-187, Lys-188, and Thr-189. The domain IV, binds dsDNA stretch occupies residues 358–484 (DLEDIEIDTS…IELMNKINKN (127 aa)).

It belongs to the DnaA family. In terms of assembly, oligomerizes as a right-handed, spiral filament on DNA at oriC.

Its subcellular location is the cytoplasm. Functionally, plays an essential role in the initiation and regulation of chromosomal replication. ATP-DnaA binds to the origin of replication (oriC) to initiate formation of the DNA replication initiation complex once per cell cycle. Binds the DnaA box (a 9 base pair repeat at the origin) and separates the double-stranded (ds)DNA. Forms a right-handed helical filament on oriC DNA; dsDNA binds to the exterior of the filament while single-stranded (ss)DNA is stabiized in the filament's interior. The ATP-DnaA-oriC complex binds and stabilizes one strand of the AT-rich DNA unwinding element (DUE), permitting loading of DNA polymerase. After initiation quickly degrades to an ADP-DnaA complex that is not apt for DNA replication. Binds acidic phospholipids. The polypeptide is Chromosomal replication initiator protein DnaA (Borrelia turicatae (strain 91E135)).